Here is a 705-residue protein sequence, read N- to C-terminus: Elongation factor G (705 aa).

The region spanning glutamate 8–leucine 294 is the tr-type G domain. GTP is bound by residues alanine 17–threonine 24, aspartate 92–histidine 96, and asparagine 146–aspartate 149.

It belongs to the TRAFAC class translation factor GTPase superfamily. Classic translation factor GTPase family. EF-G/EF-2 subfamily.

It is found in the cytoplasm. Functionally, catalyzes the GTP-dependent ribosomal translocation step during translation elongation. During this step, the ribosome changes from the pre-translocational (PRE) to the post-translocational (POST) state as the newly formed A-site-bound peptidyl-tRNA and P-site-bound deacylated tRNA move to the P and E sites, respectively. Catalyzes the coordinated movement of the two tRNA molecules, the mRNA and conformational changes in the ribosome. This chain is Elongation factor G, found in Cereibacter sphaeroides (strain KD131 / KCTC 12085) (Rhodobacter sphaeroides).